A 66-amino-acid polypeptide reads, in one-letter code: UPF0434 protein Mnod_1613 (66 aa).

It belongs to the UPF0434 family.

This chain is UPF0434 protein Mnod_1613, found in Methylobacterium nodulans (strain LMG 21967 / CNCM I-2342 / ORS 2060).